A 309-amino-acid chain; its full sequence is tRNA pseudouridine synthase B (309 aa).

Asp39 (nucleophile) is an active-site residue.

This sequence belongs to the pseudouridine synthase TruB family. Type 1 subfamily.

It carries out the reaction uridine(55) in tRNA = pseudouridine(55) in tRNA. Its function is as follows. Responsible for synthesis of pseudouridine from uracil-55 in the psi GC loop of transfer RNAs. The polypeptide is tRNA pseudouridine synthase B (Bacillus pumilus (strain SAFR-032)).